The sequence spans 298 residues: Lipoyl synthase 1 (298 aa).

[4Fe-4S] cluster-binding residues include Cys-34, Cys-39, Cys-45, Cys-60, Cys-64, Cys-67, and Ser-274. A Radical SAM core domain is found at 46-263 (FYQGTATFLM…RRLGESMGFL (218 aa)).

This sequence belongs to the radical SAM superfamily. Lipoyl synthase family. Requires [4Fe-4S] cluster as cofactor.

The protein localises to the cytoplasm. It catalyses the reaction [[Fe-S] cluster scaffold protein carrying a second [4Fe-4S](2+) cluster] + N(6)-octanoyl-L-lysyl-[protein] + 2 oxidized [2Fe-2S]-[ferredoxin] + 2 S-adenosyl-L-methionine + 4 H(+) = [[Fe-S] cluster scaffold protein] + N(6)-[(R)-dihydrolipoyl]-L-lysyl-[protein] + 4 Fe(3+) + 2 hydrogen sulfide + 2 5'-deoxyadenosine + 2 L-methionine + 2 reduced [2Fe-2S]-[ferredoxin]. It functions in the pathway protein modification; protein lipoylation via endogenous pathway; protein N(6)-(lipoyl)lysine from octanoyl-[acyl-carrier-protein]: step 2/2. In terms of biological role, catalyzes the radical-mediated insertion of two sulfur atoms into the C-6 and C-8 positions of the octanoyl moiety bound to the lipoyl domains of lipoate-dependent enzymes, thereby converting the octanoylated domains into lipoylated derivatives. This chain is Lipoyl synthase 1, found in Thermosynechococcus vestitus (strain NIES-2133 / IAM M-273 / BP-1).